Here is a 104-residue protein sequence, read N- to C-terminus: MSSVPASAYLTLAIILFCIGLFGALTKRNTVIVLVCIELMLNAANLNLVAFSKLGLFPNLTGQIFSLFTMAVAAAEAAVGLAILIALYRNRTTVQVDEMDTLKG.

The next 3 membrane-spanning stretches (helical) occupy residues Val4 to Ala24, Val31 to Phe51, and Leu67 to Leu87.

This sequence belongs to the complex I subunit 4L family. As to quaternary structure, NDH-1 is composed of 14 different subunits. Subunits NuoA, H, J, K, L, M, N constitute the membrane sector of the complex.

Its subcellular location is the cell membrane. It carries out the reaction a quinone + NADH + 5 H(+)(in) = a quinol + NAD(+) + 4 H(+)(out). Its function is as follows. NDH-1 shuttles electrons from NADH, via FMN and iron-sulfur (Fe-S) centers, to quinones in the respiratory chain. The immediate electron acceptor for the enzyme in this species is believed to be a menaquinone. Couples the redox reaction to proton translocation (for every two electrons transferred, four hydrogen ions are translocated across the cytoplasmic membrane), and thus conserves the redox energy in a proton gradient. The sequence is that of NADH-quinone oxidoreductase subunit K from Bacillus cereus (strain G9842).